Consider the following 294-residue polypeptide: Glycine--tRNA ligase alpha subunit (294 aa).

The protein belongs to the class-II aminoacyl-tRNA synthetase family. In terms of assembly, tetramer of two alpha and two beta subunits.

It is found in the cytoplasm. It carries out the reaction tRNA(Gly) + glycine + ATP = glycyl-tRNA(Gly) + AMP + diphosphate. The sequence is that of Glycine--tRNA ligase alpha subunit from Lawsonia intracellularis (strain PHE/MN1-00).